Consider the following 90-residue polypeptide: Progonadoliberin-3 (90 aa).

A signal peptide spans 1–23; it reads MEASSRVTVQVLLLALVVQVTLS. At Gln24 the chain carries Pyrrolidone carboxylic acid. At Gly33 the chain carries Glycine amide.

It belongs to the GnRH family.

The protein resides in the secreted. In terms of biological role, stimulates the secretion of gonadotropins. The chain is Progonadoliberin-3 (gnrh3) from Pagrus major (Red sea bream).